A 212-amino-acid chain; its full sequence is Large ribosomal subunit protein uL1 (212 aa).

The protein belongs to the universal ribosomal protein uL1 family. In terms of assembly, part of the 50S ribosomal subunit.

Binds directly to 23S rRNA. Probably involved in E site tRNA release. In terms of biological role, protein L1 is also a translational repressor protein, it controls the translation of its operon by binding to its mRNA. This Haloarcula marismortui (strain ATCC 43049 / DSM 3752 / JCM 8966 / VKM B-1809) (Halobacterium marismortui) protein is Large ribosomal subunit protein uL1.